The sequence spans 522 residues: Ribonuclease Y (522 aa).

Residues glutamate 3–glycine 23 form a helical membrane-spanning segment. One can recognise a KH domain in the interval cysteine 212 to leucine 272. In terms of domain architecture, HD spans leucine 338–alanine 431.

The protein belongs to the RNase Y family.

Its subcellular location is the cell membrane. In terms of biological role, endoribonuclease that initiates mRNA decay. The protein is Ribonuclease Y of Cytophaga hutchinsonii (strain ATCC 33406 / DSM 1761 / CIP 103989 / NBRC 15051 / NCIMB 9469 / D465).